The primary structure comprises 78 residues: Large ribosomal subunit protein bL28 (78 aa).

Belongs to the bacterial ribosomal protein bL28 family.

This is Large ribosomal subunit protein bL28 from Erwinia tasmaniensis (strain DSM 17950 / CFBP 7177 / CIP 109463 / NCPPB 4357 / Et1/99).